The chain runs to 477 residues: Tripartite motif-containing protein 72 (477 aa).

Zn(2+) is bound by residues cysteine 14, cysteine 17, cysteine 29, histidine 31, cysteine 34, cysteine 37, cysteine 53, cysteine 56, cysteine 86, histidine 89, cysteine 97, aspartate 100, cysteine 105, cysteine 108, histidine 114, and histidine 117. The RING-type zinc finger occupies 14–57; the sequence is CPLCLQLFDAPVTAECGHSFCRACLGRVAGEPAADGTVLCPCCQ. A B box-type zinc finger spans residues 81-122; the sequence is VPQGHCEEHLDPLSIYCEQDRALVCGVCASLGSHRGHRLLPA. A coiled-coil region spans residues 135-232; the sequence is QQKLQLQEAC…EKVLEEVADK (98 aa). Position 144 is an S-nitrosocysteine (cysteine 144). At serine 255 the chain carries Phosphoserine. The B30.2/SPRY domain occupies 271–475; sequence DFKFQVWRKM…PLLLVGPEGA (205 aa).

This sequence belongs to the TRIM/RBCC family. As to quaternary structure, homodimer. Homooligomer; disulfide-linked. Oligomerizes on the phospholipid membrane. Interacts with DYSF and CAV3. Disulfide bond formation at Cys-242 occurs in case of membrane damage that cause the entry of the oxidized milieu of the extracellular space, resulting in homooligomerization. In terms of processing, S-nitrosylation at Cys-144 stabilizes TRIM72 and protects against oxidation-induced protein degradation and cell death.

It localises to the cell membrane. The protein localises to the sarcolemma. The protein resides in the cytoplasmic vesicle membrane. The enzyme catalyses S-ubiquitinyl-[E2 ubiquitin-conjugating enzyme]-L-cysteine + [acceptor protein]-L-lysine = [E2 ubiquitin-conjugating enzyme]-L-cysteine + N(6)-ubiquitinyl-[acceptor protein]-L-lysine.. The protein operates within protein modification; protein ubiquitination. Specifically binds phosphatidylserine. The binding to phospholipids enhances ubiquitination activity. In terms of biological role, muscle-specific E3 ubiquitin-protein ligase that plays a central role in cell membrane repair by nucleating the assembly of the repair machinery at injury sites. Its ubiquitination activity is mediated by E2 ubiquitin-conjugating enzymes UBE2D1, UBE2D2 and UBE2D3. Acts as a sensor of oxidation: upon membrane damage, entry of extracellular oxidative environment results in disulfide bond formation and homooligomerization at the injury site. This oligomerization acts as a nucleation site for recruitment of TRIM72-containing vesicles to the injury site, leading to membrane patch formation. Probably acts upstream of the Ca(2+)-dependent membrane resealing process. Required for transport of DYSF to sites of cell injury during repair patch formation. Regulates membrane budding and exocytosis. May be involved in the regulation of the mobility of KCNB1-containing endocytic vesicles. This chain is Tripartite motif-containing protein 72, found in Homo sapiens (Human).